Consider the following 373-residue polypeptide: Alpha-N-acetylgalactosaminide alpha-2,6-sialyltransferase 2 (373 aa).

The Cytoplasmic segment spans residues 1–6; it reads MDLPRR. Residues 7–27 traverse the membrane as a helical; Signal-anchor for type II membrane protein segment; the sequence is WLFRMLLLVATSSGILLMLYS. The Lumenal portion of the chain corresponds to 28 to 373; it reads SAGQQSPETQ…NAGILWLYQR (346 aa). 2 disulfides stabilise this stretch: Cys65–Cys147 and Cys150–Cys316. An N-linked (GlcNAc...) asparagine glycan is attached at Asn103. A CMP-N-acetyl-beta-neuraminate-binding site is contributed by Asn155. Residue Asn160 is glycosylated (N-linked (GlcNAc...) asparagine). Residues Asn178, Ser303, and His335 each coordinate CMP-N-acetyl-beta-neuraminate.

It belongs to the glycosyltransferase 29 family. As to expression, highly expressed in lactating mammary gland and adult testis. Lower levels in kidney.

It is found in the golgi apparatus membrane. The catalysed reaction is a beta-D-galactosyl-(1-&gt;3)-N-acetyl-alpha-D-galactosaminyl derivative + CMP-N-acetyl-beta-neuraminate = a beta-D-galactosyl-(1-&gt;3)-[N-acetyl-alpha-neuraminyl-(2-&gt;6)]-N-acetyl-alpha-D-galactosaminyl derivative + CMP + H(+). The enzyme catalyses a 3-O-[N-acetyl-alpha-D-galactosaminyl]-L-threonyl-[protein] + CMP-N-acetyl-beta-neuraminate = a 3-O-[N-acetyl-alpha-neuraminosyl-(2-&gt;6)-N-acetyl-alpha-D-galactosaminyl]-L-threonyl-[protein] + CMP + H(+). It catalyses the reaction a 3-O-[N-acetyl-alpha-neuraminyl-(2-&gt;3)-beta-D-galactosyl-(1-&gt;3)-N-acetyl-alpha-D-galactosaminyl]-L-threonyl-[protein] + CMP-N-acetyl-beta-neuraminate = a 3-O-{alpha-Neu5Ac-(2-&gt;3)-beta-D-Gal-(1-&gt;3)-[alpha-Neu5Ac-(2-&gt;6)]-alpha-D-GalNAc}-L-threonyl-[protein] + CMP + H(+). Its pathway is protein modification; protein glycosylation. Catalyzes the transfer of N-acetylneuraminyl groups onto glycan chains in glycoproteins. Conjugates sialic acid with an alpha-2-6 linkage to N-acetylgalactosamine (GalNAc) glycan chains linked to serine or threonine in glycoproteins. Sialylates alphaGalNAc- and Galbeta1-&gt;3GalNAc-O-Ser/Thr epitopes also known as Tn and T antigens. In Mus musculus (Mouse), this protein is Alpha-N-acetylgalactosaminide alpha-2,6-sialyltransferase 2 (St6galnac2).